The sequence spans 190 residues: Protein GrpE (190 aa).

Over residues 1 to 31 (MTETPNTSSEEIQTSEPSSDNELQTLQQENA) the composition is skewed to polar residues. Residues 1–34 (MTETPNTSSEEIQTSEPSSDNELQTLQQENANLK) are disordered.

This sequence belongs to the GrpE family. As to quaternary structure, homodimer.

It is found in the cytoplasm. Participates actively in the response to hyperosmotic and heat shock by preventing the aggregation of stress-denatured proteins, in association with DnaK and GrpE. It is the nucleotide exchange factor for DnaK and may function as a thermosensor. Unfolded proteins bind initially to DnaJ; upon interaction with the DnaJ-bound protein, DnaK hydrolyzes its bound ATP, resulting in the formation of a stable complex. GrpE releases ADP from DnaK; ATP binding to DnaK triggers the release of the substrate protein, thus completing the reaction cycle. Several rounds of ATP-dependent interactions between DnaJ, DnaK and GrpE are required for fully efficient folding. The sequence is that of Protein GrpE from Chlamydia muridarum (strain MoPn / Nigg).